The following is a 513-amino-acid chain: Cytochrome P450 monooxygenase CYP3 (513 aa).

Residues 1 to 21 (MLPRSLGHSTSELSPPFDGPN) are disordered. Cysteine 451 provides a ligand contact to heme.

It belongs to the cytochrome P450 family. The cofactor is heme.

It participates in secondary metabolite biosynthesis. Cytochrome P450 monooxygenase; part of the gene cluster that mediates the biosynthesis of a tyrosine-derived cytochalasan acting as a fungal signal recognized by resistant rice plants and leads to avirulence in Pi33 resistant rice cultivars. The first step in the pathway is catalyzed by the hybrid PKS-NRPS ACE1, assisted by the enoyl reductase RAP1, that are responsible for fusion of the tyrosine precursor and the polyketide backbone. The polyketide synthase module (PKS) of ACE1 is responsible for the synthesis of the polyketide backbone and the downstream nonribosomal peptide synthetase (NRPS) amidates the carboxyl end of the polyketide with the tyrosine precursor. Because ACE1 lacks a designated enoylreductase (ER) domain, the required activity is provided the enoyl reductase RAP1. Reduction by the hydrolyase ORFZ, followed by dehydration and intra-molecular Diels-Alder cyclization by the Diels-Alderase ORF3 then yield the required isoindolone-fused macrocycle. A number of oxidative steps catalyzed by the tailoring enzymes identified within the cluster, including cytochrome P450 monooxygenases CYP1 to CYP4, the FAD-linked oxidoreductase OXR2 and the short-chain dehydrogenase/reductase OXR1, are further required to afford the final cytochalasans that confer avirulence and which have still to be identified. The monooxygenase CYP1 has been shown to be a site-selective C-18 hydroxylase whereas the function of CYP3 is the site-selective epoxidation of the C-6/C-7 olefin that is present in some intermediate compounds. Finally, SYN2 and RAP2 are not required for avirulence in Pi33 resistant rice cultivars. This Pyricularia oryzae (strain 70-15 / ATCC MYA-4617 / FGSC 8958) (Rice blast fungus) protein is Cytochrome P450 monooxygenase CYP3.